We begin with the raw amino-acid sequence, 30 residues long: Photosystem I reaction center subunit XII (30 aa).

A helical membrane pass occupies residues 5 to 25; sequence SQIFFALCIALTAAVLAIGLG.

This sequence belongs to the PsaM family.

It localises to the plastid. Its subcellular location is the chloroplast thylakoid membrane. The polypeptide is Photosystem I reaction center subunit XII (Emiliania huxleyi (Coccolithophore)).